The sequence spans 986 residues: Translation initiation factor IF-2 (986 aa).

The interval 95-394 (TFVRRDETSA…GRGKHQDQNT (300 aa)) is disordered. The segment covering 122–182 (ELQRREEEAR…EEEAAKKRAA (61 aa)) has biased composition (basic and acidic residues). Positions 183–222 (AEAAAREQAQAAKPAQAAQPAAAKAEPVAAKAAEPAVAKQ) are enriched in low complexity. Basic and acidic residues predominate over residues 228 to 277 (ERAAAERAAQREAAKKAEDAARQAAEKARAEQEQIAKRRAAAEAEARAIR). The segment covering 320-342 (APSRPAAKKPAAAAPAATTTPSA) has biased composition (low complexity). Positions 371–384 (TSGGVDRGWRGGPK) are enriched in gly residues. The tr-type G domain maps to 486–655 (PRPPVVTVMG…LLQAEVLELK (170 aa)). Positions 495–502 (GHVDHGKT) are G1. 495-502 (GHVDHGKT) is a binding site for GTP. The G2 stretch occupies residues 520 to 524 (GITQH). A G3 region spans residues 541 to 544 (DTPG). Residues 541–545 (DTPGH) and 595–598 (NKID) each bind GTP. A G4 region spans residues 595–598 (NKID). The interval 631 to 633 (SAK) is G5.

It belongs to the TRAFAC class translation factor GTPase superfamily. Classic translation factor GTPase family. IF-2 subfamily.

The protein resides in the cytoplasm. Its function is as follows. One of the essential components for the initiation of protein synthesis. Protects formylmethionyl-tRNA from spontaneous hydrolysis and promotes its binding to the 30S ribosomal subunits. Also involved in the hydrolysis of GTP during the formation of the 70S ribosomal complex. This Paraburkholderia phytofirmans (strain DSM 17436 / LMG 22146 / PsJN) (Burkholderia phytofirmans) protein is Translation initiation factor IF-2.